Reading from the N-terminus, the 742-residue chain is Phosphoribosylformylglycinamidine synthase subunit PurL (742 aa).

The active site involves His54. 2 residues coordinate ATP: Tyr57 and Lys96. Glu98 is a binding site for Mg(2+). Substrate contacts are provided by residues 99–102 and Arg121; that span reads SHNH. The Proton acceptor role is filled by His100. Asp122 contributes to the Mg(2+) binding site. Gln245 contacts substrate. Position 273 (Asp273) interacts with Mg(2+). Substrate is bound at residue 317–319; it reads ESQ. 2 residues coordinate ATP: Asp500 and Gly537. Asn538 serves as a coordination point for Mg(2+). A substrate-binding site is contributed by Ser540.

It belongs to the FGAMS family. Monomer. Part of the FGAM synthase complex composed of 1 PurL, 1 PurQ and 2 PurS subunits.

It localises to the cytoplasm. It carries out the reaction N(2)-formyl-N(1)-(5-phospho-beta-D-ribosyl)glycinamide + L-glutamine + ATP + H2O = 2-formamido-N(1)-(5-O-phospho-beta-D-ribosyl)acetamidine + L-glutamate + ADP + phosphate + H(+). It functions in the pathway purine metabolism; IMP biosynthesis via de novo pathway; 5-amino-1-(5-phospho-D-ribosyl)imidazole from N(2)-formyl-N(1)-(5-phospho-D-ribosyl)glycinamide: step 1/2. Part of the phosphoribosylformylglycinamidine synthase complex involved in the purines biosynthetic pathway. Catalyzes the ATP-dependent conversion of formylglycinamide ribonucleotide (FGAR) and glutamine to yield formylglycinamidine ribonucleotide (FGAM) and glutamate. The FGAM synthase complex is composed of three subunits. PurQ produces an ammonia molecule by converting glutamine to glutamate. PurL transfers the ammonia molecule to FGAR to form FGAM in an ATP-dependent manner. PurS interacts with PurQ and PurL and is thought to assist in the transfer of the ammonia molecule from PurQ to PurL. The protein is Phosphoribosylformylglycinamidine synthase subunit PurL of Geobacillus sp. (strain WCH70).